The following is a 182-amino-acid chain: NADH-quinone oxidoreductase subunit C 2 (182 aa).

Positions 153–182 are disordered; sequence YKDKLNPFGAEGPPPTQPDLATNDIPQGGR.

This sequence belongs to the complex I 30 kDa subunit family. In terms of assembly, NDH-1 is composed of 14 different subunits. Subunits NuoB, C, D, E, F, and G constitute the peripheral sector of the complex.

Its subcellular location is the cell inner membrane. It catalyses the reaction a quinone + NADH + 5 H(+)(in) = a quinol + NAD(+) + 4 H(+)(out). Functionally, NDH-1 shuttles electrons from NADH, via FMN and iron-sulfur (Fe-S) centers, to quinones in the respiratory chain. The immediate electron acceptor for the enzyme in this species is believed to be ubiquinone. Couples the redox reaction to proton translocation (for every two electrons transferred, four hydrogen ions are translocated across the cytoplasmic membrane), and thus conserves the redox energy in a proton gradient. This chain is NADH-quinone oxidoreductase subunit C 2, found in Rhizobium meliloti (strain 1021) (Ensifer meliloti).